We begin with the raw amino-acid sequence, 444 residues long: UDP-N-acetylmuramate--L-alanine ligase (444 aa).

Residue glycine 110–serine 116 coordinates ATP.

The protein belongs to the MurCDEF family.

The protein resides in the cytoplasm. It carries out the reaction UDP-N-acetyl-alpha-D-muramate + L-alanine + ATP = UDP-N-acetyl-alpha-D-muramoyl-L-alanine + ADP + phosphate + H(+). The protein operates within cell wall biogenesis; peptidoglycan biosynthesis. Its function is as follows. Cell wall formation. This is UDP-N-acetylmuramate--L-alanine ligase from Streptococcus pneumoniae (strain P1031).